The primary structure comprises 534 residues: Calcium-dependent protein kinase 29 (534 aa).

The tract at residues 1–72 is disordered; that stretch reads MGFCFSKFGK…STSSGSQIGP (72 aa). The N-myristoyl glycine moiety is linked to residue Gly2. Over residues 16 to 27 the composition is skewed to low complexity; the sequence is IPISSSSDSSPP. The segment covering 49–63 has biased composition (pro residues); it reads NPQPKPKPAPPPPPS. A Protein kinase domain is found at 85–343; the sequence is YDLHKELGRG…AAEALEHPWM (259 aa). ATP is bound by residues 91-99 and Lys114; that span reads LGRGQFGIT. The Proton acceptor role is filled by Asp209. Ser249 carries the phosphoserine modification. The autoinhibitory domain stretch occupies residues 348 to 378; the sequence is ISDKPINSAVLVRMKQFRAMNKLKKLALKVI. EF-hand domains lie at 385–420, 421–456, 457–492, and 493–527; these read EEIK…LGSK, LTES…RHRL, EKEE…YGMG, and DDAT…GTTD. 19 residues coordinate Ca(2+): Asp398, Asp400, Ser402, Thr404, Glu409, Asp434, Asp436, Ser438, Thr440, Glu445, Asp470, Asp472, Ser474, Glu481, Asp505, Asp507, Asp509, Arg511, and Glu516.

The protein belongs to the protein kinase superfamily. Ser/Thr protein kinase family. CDPK subfamily.

It localises to the membrane. The catalysed reaction is L-seryl-[protein] + ATP = O-phospho-L-seryl-[protein] + ADP + H(+). It carries out the reaction L-threonyl-[protein] + ATP = O-phospho-L-threonyl-[protein] + ADP + H(+). Its activity is regulated as follows. Activated by calcium. Autophosphorylation may play an important role in the regulation of the kinase activity. May play a role in signal transduction pathways that involve calcium as a second messenger. In Arabidopsis thaliana (Mouse-ear cress), this protein is Calcium-dependent protein kinase 29 (CPK29).